A 477-amino-acid chain; its full sequence is ATP synthase subunit beta (477 aa).

ATP is bound at residue 151 to 158 (GGAGVGKT).

The protein belongs to the ATPase alpha/beta chains family. In terms of assembly, F-type ATPases have 2 components, CF(1) - the catalytic core - and CF(0) - the membrane proton channel. CF(1) has five subunits: alpha(3), beta(3), gamma(1), delta(1), epsilon(1). CF(0) has three main subunits: a(1), b(2) and c(9-12). The alpha and beta chains form an alternating ring which encloses part of the gamma chain. CF(1) is attached to CF(0) by a central stalk formed by the gamma and epsilon chains, while a peripheral stalk is formed by the delta and b chains.

It localises to the cell inner membrane. It catalyses the reaction ATP + H2O + 4 H(+)(in) = ADP + phosphate + 5 H(+)(out). Produces ATP from ADP in the presence of a proton gradient across the membrane. The catalytic sites are hosted primarily by the beta subunits. This is ATP synthase subunit beta from Bradyrhizobium diazoefficiens (strain JCM 10833 / BCRC 13528 / IAM 13628 / NBRC 14792 / USDA 110).